The following is a 426-amino-acid chain: Spermatogenesis-associated protein 2-like protein (426 aa).

Disordered stretches follow at residues 204-223 (AQDE…TYGA), 234-256 (DESS…PVEL), 269-300 (LWGS…EELE), and 316-347 (SRSG…ASSA). A phosphoserine mark is found at S318 and S326.

Belongs to the SPATA2 family.

The chain is Spermatogenesis-associated protein 2-like protein from Mus musculus (Mouse).